We begin with the raw amino-acid sequence, 119 residues long: UPF0231 protein ECA3777 (119 aa).

The protein belongs to the UPF0231 family.

The polypeptide is UPF0231 protein ECA3777 (Pectobacterium atrosepticum (strain SCRI 1043 / ATCC BAA-672) (Erwinia carotovora subsp. atroseptica)).